The primary structure comprises 465 residues: Cysteine--tRNA ligase (465 aa).

Cys-28 is a binding site for Zn(2+). The 'HIGH' region motif lies at 30–40 (PTVYNYIHIGN). The Zn(2+) site is built by Cys-208, His-233, and Glu-237. The short motif at 265–269 (KMSKS) is the 'KMSKS' region element. Lys-268 contributes to the ATP binding site.

Belongs to the class-I aminoacyl-tRNA synthetase family. As to quaternary structure, monomer. The cofactor is Zn(2+).

It localises to the cytoplasm. It carries out the reaction tRNA(Cys) + L-cysteine + ATP = L-cysteinyl-tRNA(Cys) + AMP + diphosphate. This Exiguobacterium sibiricum (strain DSM 17290 / CCUG 55495 / CIP 109462 / JCM 13490 / 255-15) protein is Cysteine--tRNA ligase.